The chain runs to 61 residues: Protein translocase subunit SecE (61 aa).

Residues 39–59 (LGILVIGLVGMLIRIIGILML) traverse the membrane as a helical segment.

The protein belongs to the SecE/SEC61-gamma family. As to quaternary structure, component of the Sec protein translocase complex. Heterotrimer consisting of SecY (alpha), SecG (beta) and SecE (gamma) subunits. The heterotrimers can form oligomers, although 1 heterotrimer is thought to be able to translocate proteins. Interacts with the ribosome. May interact with SecDF, and other proteins may be involved.

The protein localises to the cell membrane. Its function is as follows. Essential subunit of the Sec protein translocation channel SecYEG. Clamps together the 2 halves of SecY. May contact the channel plug during translocation. The sequence is that of Protein translocase subunit SecE from Pyrococcus horikoshii (strain ATCC 700860 / DSM 12428 / JCM 9974 / NBRC 100139 / OT-3).